A 440-amino-acid chain; its full sequence is Glutamyl-tRNA reductase (440 aa).

Substrate-binding positions include 47–50 (TCNR), S110, 115–117 (ERE), and Q121. The Nucleophile role is filled by C48. NADP(+) is bound at residue 192 to 197 (GTGAYA).

It belongs to the glutamyl-tRNA reductase family. Homodimer.

It carries out the reaction (S)-4-amino-5-oxopentanoate + tRNA(Glu) + NADP(+) = L-glutamyl-tRNA(Glu) + NADPH + H(+). The protein operates within porphyrin-containing compound metabolism; protoporphyrin-IX biosynthesis; 5-aminolevulinate from L-glutamyl-tRNA(Glu): step 1/2. In terms of biological role, catalyzes the NADPH-dependent reduction of glutamyl-tRNA(Glu) to glutamate 1-semialdehyde (GSA). This Paenarthrobacter aurescens (strain TC1) protein is Glutamyl-tRNA reductase.